Here is a 558-residue protein sequence, read N- to C-terminus: Glypican-1 (558 aa).

Positions 1–23 (MELRARGWWLLCAAAALVACARG) are cleaved as a signal peptide. 7 disulfides stabilise this stretch: cysteine 32/cysteine 68, cysteine 62/cysteine 256, cysteine 69/cysteine 259, cysteine 191/cysteine 343, cysteine 246/cysteine 279, cysteine 268/cysteine 415, and cysteine 272/cysteine 401. Asparagine 79 and asparagine 116 each carry an N-linked (GlcNAc...) asparagine glycan. Residues 341-374 (QGCGNPKVNPQGPGPEEKRRRGKLAPRERPPSGT) are disordered. The segment covering 355 to 370 (PEEKRRRGKLAPRERP) has biased composition (basic and acidic residues). O-linked (Xyl...) (heparan sulfate) serine glycosylation is found at serine 486, serine 488, and serine 490. The tract at residues 505-534 (RKSSSSRTPLTHALPGLSEQEGQKTSAASC) is disordered. The GPI-anchor amidated serine moiety is linked to residue serine 530. Positions 531–558 (AASCPQPPTFLLPLLLFLALTVARPRWR) are cleaved as a propeptide — removed in mature form.

The protein belongs to the glypican family. Post-translationally, S-nitrosylated in a Cu(2+)-dependent manner. Nitric acid (NO) is released from the nitrosylated cysteines by ascorbate or by some other reducing agent, in a Cu(2+) or Zn(2+) dependent manner. This free nitric oxide is then capable of cleaving the heparan sulfate side chains. In terms of processing, N- and O-glycosylated. N-glycosylation is mainly of the complex type containing sialic acid. O-glycosylated with heparan sulfate. The heparan sulfate chains can be cleaved either by the action of heparanase or, degraded by a deaminative process that uses nitric oxide (NO) released from the S-nitrosylated cysteines. This process is triggered by ascorbate, or by some other reducing agent, in a Cu(2+)- or Zn(2+) dependent manner. Cu(2+) ions are provided by ceruloproteins such as APP, PRNP or CP which associate with GCP1 in intracellular compartments or lipid rafts. This cell-associated glypican is further processed to give rise to a medium-released species.

It localises to the cell membrane. The protein localises to the endosome. It is found in the secreted. The protein resides in the extracellular space. Its function is as follows. Cell surface proteoglycan that bears heparan sulfate. Binds, via the heparan sulfate side chains, alpha-4 (V) collagen and participates in Schwann cell myelination. May act as a catalyst in increasing the rate of conversion of prion protein PRPN(C) to PRNP(Sc) via associating (via the heparan sulfate side chains) with both forms of PRPN, targeting them to lipid rafts and facilitating their interaction. Required for proper skeletal muscle differentiation by sequestering FGF2 in lipid rafts preventing its binding to receptors (FGFRs) and inhibiting the FGF-mediated signaling. The protein is Glypican-1 (GPC1) of Homo sapiens (Human).